Consider the following 722-residue polypeptide: MSWFTDLAGRAEDFLNLVDQGAATALKTKDGNDLIMDSITDYSGNFEEKQKTTEKYQSQAKSSFISSAADNIKHQKATMLAGTANIKTGTRSSIESSHNSSVNVSSHRSTTQFVRQKKSEPDDEQLFDFLNSSDKVHSSSQKETRKESASVNQAVKPISQSVTMAEDFHNTTEDAGVPLLPELGITEPVVKAETLSDSGSSASLSTTGDPKSHELSNLRLENQLLRNEVQSLNQEMASLIQRSKETQEELNEARTRMEKWNGDNSKNDRTARELRAQVDDLSEAMAAKDSQLAVLKVRLQEADQLLKSRTETLESLQIEKSRILQDQSEGSSIHNQALQTMQERLREAESTLIREQESYKQIQNEFATRLSKIEAERQNLAEAVILAEKKHMEEKRKSDDLQQQLKTSKVGLDSLKQEMADYKQKATRILQSKEKLINSLKEGSGIEGLDSHSASTMELEEMRHERDMQREEIQKLMGQIQQLKAELQDVETQQVSEAESAREQLQDVHEQFATQQRAKQELEAELERQKQEFQYIQEDLYKTKNTLQGRIRDREDEIQKLRNQLTNKALSSSSQTELENRLHQLTETLIQKQTMLENLSTEKNSLVYQLERLEHQLKNVQGSSLNGTSINMSVIESNEGARMRNVPVLFSDSDPNVAGMYGRVRKAATSIDQFSIRLGIFLRRYPIARVFIIIYMALLHLWVMIVLLTYTPEMHHDTPSGK.

Over 1-689 (MSWFTDLAGR…IFLRRYPIAR (689 aa)) the chain is Cytoplasmic. Disordered stretches follow at residues 90-158 (TRSS…VKPI) and 194-215 (TLSD…SHEL). The span at 91–109 (RSSIESSHNSSVNVSSHRS) shows a compositional bias: low complexity. Over residues 134–148 (DKVHSSSQKETRKES) the composition is skewed to basic and acidic residues. A compositionally biased stretch (polar residues) spans 149-158 (ASVNQAVKPI). Residues 195 to 209 (LSDSGSSASLSTTGD) show a composition bias toward low complexity. A coiled-coil region spans residues 211–622 (KSHELSNLRL…LEHQLKNVQG (412 aa)). The chain crosses the membrane as a helical; Anchor for type IV membrane protein span at residues 690–710 (VFIIIYMALLHLWVMIVLLTY). The Lumenal segment spans residues 711 to 722 (TPEMHHDTPSGK).

The protein resides in the golgi apparatus membrane. Functionally, involved in maintaining Golgi structure. Stimulates the formation of Golgi stacks and ribbons. Involved in intra-Golgi retrograde transport. The polypeptide is Golgin subfamily A member 5 (golga5) (Xenopus laevis (African clawed frog)).